Here is a 585-residue protein sequence, read N- to C-terminus: MANPFLLSLSLCLVLLYTSACLGEGLDRFNECQLDRLNALEPDNRIESEGGVTETWNSNKPELRCAGVAFEKHTIEPKGLHLPSYTNYPQIIMIVQGEGALGISVPGCTETFEEAQQSQSRQERRRGQRSQSQEQEDSHQKIRHFREGDILVIPPGTPYWTYNYGDEQLVAINLLDTTSLSNQLDPNPRRFYLAGNPEEEYPETQQQRQQRQQHQRPSGRRHGQHQKEEEQEGKNNILSGFDPQFLSQALNIDEDTVHKLQNPNERIKQIIRVEEGLGVISPKWQEQEEEEEEKEEPRQRRRRERREEREEEEKEEEDEPRESRRHRGGHEEEEVEEERGRGRGGSEWKRTTRRRHTRGDEGQEEEETTTTTEERRRRRGGRGSRQEEEEEQSPPRSRNGLEETICTAILRENIADPTRADLYNPTAGRISTANSLTLPILGWFQLSAEYVNLYRNGIYAPHWNINANSVIYVIRGRGRVQVVNSQGNSVFNDDLRRGQLLVVPQNFVVAHQAGDEGFEFIAFKTNDQATTSPLKQVFRGIPAEVLANAFRLSLNQVSELKYNGNHNPLVTPQSQSQDHNLVKVA.

The first 23 residues, 1 to 23, serve as a signal peptide directing secretion; the sequence is MANPFLLSLSLCLVLLYTSACLG. 2 disulfide bridges follow: Cys-32–Cys-65 and Cys-108–Cys-406. In terms of domain architecture, Cupin type-1 1 spans 37-258; it reads LNALEPDNRI…ALNIDEDTVH (222 aa). 3 disordered regions span residues 113–147, 199–240, and 283–402; these read EEAQ…HFRE, EEYP…ILSG, and KWQE…NGLE. A compositionally biased stretch (basic and acidic residues) spans 136–147; it reads EDSHQKIRHFRE. A compositionally biased stretch (basic residues) spans 211 to 224; the sequence is RQQHQRPSGRRHGQ. Residues 309-320 show a composition bias toward acidic residues; that stretch reads REEEEKEEEDEP. Basic and acidic residues predominate over residues 338-350; that stretch reads ERGRGRGGSEWKR. Residues 412–558 enclose the Cupin type-1 2 domain; it reads ENIADPTRAD…AFRLSLNQVS (147 aa). A compositionally biased stretch (polar residues) spans 565-579; it reads NHNPLVTPQSQSQDH. Residues 565–585 are disordered; it reads NHNPLVTPQSQSQDHNLVKVA.

It belongs to the 11S seed storage protein (globulins) family. In terms of assembly, hexamer; each subunit is composed of an acidic and a basic chain derived from a single precursor and linked by a disulfide bond. Component of globulins complexes which accumulate in seeds.

Sulfur-rich seed storage protein. This protein found in the seeds of many leguminous and non-leguminous plants is the source of sulfur-containing amino acids in seed meals. The protein is Conglutin alpha 3 of Lupinus angustifolius (Narrow-leaved blue lupine).